A 287-amino-acid polypeptide reads, in one-letter code: Glycine--tRNA ligase alpha subunit (287 aa).

The protein belongs to the class-II aminoacyl-tRNA synthetase family. As to quaternary structure, tetramer of two alpha and two beta subunits.

It localises to the cytoplasm. The enzyme catalyses tRNA(Gly) + glycine + ATP = glycyl-tRNA(Gly) + AMP + diphosphate. This chain is Glycine--tRNA ligase alpha subunit, found in Campylobacter jejuni (strain RM1221).